Here is a 249-residue protein sequence, read N- to C-terminus: Flagellar brake protein YcgR (249 aa).

Residues 117 to 236 (QRREFFRVDA…ERELQQVIFS (120 aa)) enclose the PilZ domain.

Belongs to the YcgR family. As to quaternary structure, monomer. Interacts with the flagellar basal bodies.

The protein resides in the bacterial flagellum basal body. Its function is as follows. Acts as a flagellar brake, regulating swimming and swarming in a bis-(3'-5') cyclic diguanylic acid (c-di-GMP)-dependent manner. Binds 1 c-di-GMP dimer per subunit. Increasing levels of c-di-GMP lead to decreased motility. This is Flagellar brake protein YcgR from Erwinia tasmaniensis (strain DSM 17950 / CFBP 7177 / CIP 109463 / NCPPB 4357 / Et1/99).